The primary structure comprises 582 residues: MQPIRMLSSSLSSQISAGEVIERPSSVIKELLENSIDAQAKNIDISVERSGLNSITVKDDGFGIEKDQLLLAISRHATSKINRLSDLDNINTFGFRGEALASIRAVSRMKLISCSQNSNIAWSIYSEGFSNHTLLQPIAHPIGTSIIVDNLFYNIPVRLKFIKNERSEFLKIDETIKKIALSNFGINIFFKKDKKLFVSYKAITKNNNKIHRLKTVFNQIDLNYVLEIKEKMHNITLFGWLIFPSSLSSTFKKIQYCYVNNRFVYNNLIKSAVFNSFYEIIGNKRSTSFILYLTLPSNEIDINIHPTKNEIKFHKSNIIYFFVYQSILSSLKKCKIKYISNNFFLKTHSNKCKNNNSDSLNTKLVSQIHSKYEKKDLYKDVISTDLFKINSQRFLKEYFFSFGKLLIVFQKYYGLMYYSNTFSLISFPLAKKIVEQYKLRSAIKNNMIPEIFSYNFLYFITFKQNKILSNNLKLLLKFGFNLILKEKYFFLKTIPIFLKNQNLDVLLSSFFSFIFFKKKIYIKDIIKWFDTTILIEKNSWNYEDGISILLEIEYFCPSIFKKPPLKLLQKINVDEVLCILKV.

The protein belongs to the DNA mismatch repair MutL/HexB family.

Functionally, this protein is involved in the repair of mismatches in DNA. It is required for dam-dependent methyl-directed DNA mismatch repair. May act as a 'molecular matchmaker', a protein that promotes the formation of a stable complex between two or more DNA-binding proteins in an ATP-dependent manner without itself being part of a final effector complex. This chain is DNA mismatch repair protein MutL, found in Buchnera aphidicola subsp. Schizaphis graminum (strain Sg).